Here is a 220-residue protein sequence, read N- to C-terminus: tRNA (guanine-N(7)-)-methyltransferase (220 aa).

S-adenosyl-L-methionine contacts are provided by glutamate 44, glutamate 69, aspartate 96, and aspartate 118. Aspartate 118 is an active-site residue. Lysine 122 lines the substrate pocket. An interaction with RNA region spans residues 124–129; the sequence is RHEKRR. Substrate is bound by residues aspartate 154 and 191 to 194; that span reads TEYE.

The protein belongs to the class I-like SAM-binding methyltransferase superfamily. TrmB family.

The enzyme catalyses guanosine(46) in tRNA + S-adenosyl-L-methionine = N(7)-methylguanosine(46) in tRNA + S-adenosyl-L-homocysteine. Its pathway is tRNA modification; N(7)-methylguanine-tRNA biosynthesis. Functionally, catalyzes the formation of N(7)-methylguanine at position 46 (m7G46) in tRNA. In Halalkalibacterium halodurans (strain ATCC BAA-125 / DSM 18197 / FERM 7344 / JCM 9153 / C-125) (Bacillus halodurans), this protein is tRNA (guanine-N(7)-)-methyltransferase.